Here is a 95-residue protein sequence, read N- to C-terminus: Co-chaperonin GroES (95 aa).

Belongs to the GroES chaperonin family. Heptamer of 7 subunits arranged in a ring. Interacts with the chaperonin GroEL.

Its subcellular location is the cytoplasm. In terms of biological role, together with the chaperonin GroEL, plays an essential role in assisting protein folding. The GroEL-GroES system forms a nano-cage that allows encapsulation of the non-native substrate proteins and provides a physical environment optimized to promote and accelerate protein folding. GroES binds to the apical surface of the GroEL ring, thereby capping the opening of the GroEL channel. This Chlorobium phaeovibrioides (strain DSM 265 / 1930) (Prosthecochloris vibrioformis (strain DSM 265)) protein is Co-chaperonin GroES.